A 989-amino-acid chain; its full sequence is Voltage-gated delayed rectifier potassium channel KCNH1 (989 aa).

The Cytoplasmic portion of the chain corresponds to 1-220 (MTMAGGRRGL…LHYCVFKTTW (220 aa)). The region spanning 14-94 (QNTFLENIVR…QTFENYEMNS (81 aa)) is the PAS domain. A PAC domain is found at 93 to 145 (NSFEILMYKKNRTPVWFFVKIAPIRNEQDKVVLFLCTFSDITAFKQPIEDDSC). The tract at residues 151–162 (FARLTRALTSSR) is required for phosphatidylinositol bisphosphate binding. Residues 221 to 241 (DWIILILTFYTAILVPYNVSF) traverse the membrane as a helical segment. Residues 242-248 (KTRQNNV) lie on the Extracellular side of the membrane. The chain crosses the membrane as a helical span at residues 249–269 (AWLVVDSIVDVIFLVDIVLNF). Over 270-290 (HTTFVGPAGEVISDPKLIRMN) the chain is Cytoplasmic. The chain crosses the membrane as a helical span at residues 291 to 309 (YLKTWFVIDLLSCLPYDVI). The Extracellular portion of the chain corresponds to 310-345 (NAFENVDEVSAFMGDPGKIGFADQIPPPLEGRESQG). Residues 346–368 (ISSLFSSLKVVRLLRLGRVARKL) form a helical; Voltage-sensor membrane-spanning segment. At 369-377 (DHYIEYGAA) the chain is on the cytoplasmic side. The helical transmembrane segment at 378–399 (VLVLLVCVFGLAAHWMACIWYS) threads the bilayer. The Extracellular portion of the chain corresponds to 400–448 (IGDYEIFDEDTKTIRNNSWLYQLAMDIGTPYQFNGSGSGKWEGGPSKNS). Residues Asn415 and Asn433 are each glycosylated (N-linked (GlcNAc...) asparagine). Residues 449–470 (VYISSLYFTMTSLTSVGFGNIA) constitute an intramembrane region (pore-forming). The Selectivity filter signature appears at 463–468 (SVGFGN). The Extracellular segment spans residues 471-477 (PSTDIEK). The chain crosses the membrane as a helical span at residues 478–498 (IFAVAIMMIGSLLYATIFGNV). Topologically, residues 499–989 (TTIFQQMYAN…ESERDIFGAS (491 aa)) are cytoplasmic. Residues 673-770 (KRDALQKVLE…LDDLDVEKGN (98 aa)) are calmodulin-binding. An interaction with cyclic nucleotide-binding pocket region spans residues 699–701 (YNL). Residues 855 to 879 (KAESMETLPERTKASGEATLKKTDS) show a composition bias toward basic and acidic residues. 2 disordered regions span residues 855-886 (KAES…GITK) and 962-989 (RSSQ…FGAS). Residues 924-964 (ATVLEVRHELKEDIKALNAKMTNIEKQLSEILRILTSRRSS) form a CAD (involved in subunit assembly) region. Phosphoserine is present on residues Ser974, Ser978, and Ser981. The span at 980-989 (ESERDIFGAS) shows a compositional bias: basic and acidic residues.

The protein belongs to the potassium channel family. H (Eag) (TC 1.A.1.20) subfamily. Kv10.1/KCNH1 sub-subfamily. As to quaternary structure, homomultimer. The potassium channel is composed of a homo- or heterotetrameric complex of pore-forming alpha subunits that can associate with modulating beta subunits. Heteromultimer with KCNH5/EAG2. Interacts with ALG10B. Interacts with RABEP1. Interacts (via C-terminus) with CTTN. Interacts (via C-terminal cytoplasmic region) with Ca(2+)-bound calmodulin. Interacts with the spider kappa-theraphotoxin-Aa1a and mu/kappa-theraphotoxin-Ap1a. Post-translationally, channel activity is regulated via tyrosine phosphorylation/dephosphorylation by SRC and PTPN6. In terms of tissue distribution, highly expressed in brain and in myoblasts at the onset of fusion, but not in other tissues. Detected in HeLa (cervical carcinoma), SH-SY5Y (neuroblastoma) and MCF-7 (epithelial tumor) cells, but not in normal epithelial cells.

The protein localises to the cell membrane. It is found in the nucleus inner membrane. It localises to the cell projection. The protein resides in the dendrite. Its subcellular location is the axon. The protein localises to the presynaptic cell membrane. It is found in the perikaryon. It localises to the postsynaptic density membrane. The protein resides in the early endosome membrane. The enzyme catalyses K(+)(in) = K(+)(out). Its activity is regulated as follows. Channel activity is inhibited by interaction with Ca(2+)-bound calmodulin. Interaction of a single pore-forming alpha subunit with a calmodulin chain is sufficient to promote channel closure. Channel activity is not regulated by cyclic nucleotides. Channel activity is inhibited by binding intracellular phosphatidylinositol-3,5-bisphosphate and phosphatidylinositol-4,5-bisphosphate (PIP2), but is not inhibited by phosphatidylinositol 4-phosphate. Inhibited by the spider kappa-theraphotoxin-Aa1a and mu/kappa-theraphotoxin-Ap1a. Functionally, pore-forming (alpha) subunit of a voltage-gated delayed rectifier potassium channel that mediates outward-rectifying potassium currents which, on depolarization, reaches a steady-state level and do not inactivate. The activation kinetics depend on the prepulse potential and external divalent cation concentration. With negative prepulses, the current activation is delayed and slowed down several fold, whereas more positive prepulses speed up activation. The time course of activation is biphasic with a fast and a slowly activating current component. Activates at more positive membrane potentials and exhibit a steeper activation curve. Channel properties are modulated by subunit assembly. Mediates IK(NI) current in myoblasts. Involved in the regulation of cell proliferation and differentiation, in particular adipogenic and osteogenic differentiation in bone marrow-derived mesenchymal stem cells (MSCs). The protein is Voltage-gated delayed rectifier potassium channel KCNH1 of Homo sapiens (Human).